Consider the following 435-residue polypeptide: Probable xyloglucan galactosyltransferase GT19 (435 aa).

The Cytoplasmic segment spans residues 1-6; the sequence is MASKST. A helical; Signal-anchor for type II membrane protein transmembrane segment spans residues 7 to 23; it reads VTTLTIFFFFFFFFIEP. Residues 24-435 lie on the Lumenal side of the membrane; sequence KVQSQQISAV…GVLDRIISRV (412 aa). Residues Asn-140, Asn-203, and Asn-277 are each glycosylated (N-linked (GlcNAc...) asparagine).

It belongs to the glycosyltransferase 47 family. As to expression, expressed in roots, hypocotyls, cotyledons, leaves, stems, stamens and pollen grains.

The protein localises to the golgi apparatus membrane. In terms of biological role, functions in xyloglucan synthesis by adding side chains to the xylosylated glucan backbone. Involved in the galactosylation of hemicellulose xyloglucan. This is Probable xyloglucan galactosyltransferase GT19 from Arabidopsis thaliana (Mouse-ear cress).